Reading from the N-terminus, the 889-residue chain is Alanine--tRNA ligase (889 aa).

Residues His574, His578, Cys676, and His680 each contribute to the Zn(2+) site.

Belongs to the class-II aminoacyl-tRNA synthetase family. The cofactor is Zn(2+).

Its subcellular location is the cytoplasm. The enzyme catalyses tRNA(Ala) + L-alanine + ATP = L-alanyl-tRNA(Ala) + AMP + diphosphate. Functionally, catalyzes the attachment of alanine to tRNA(Ala) in a two-step reaction: alanine is first activated by ATP to form Ala-AMP and then transferred to the acceptor end of tRNA(Ala). Also edits incorrectly charged Ser-tRNA(Ala) and Gly-tRNA(Ala) via its editing domain. The protein is Alanine--tRNA ligase of Thermobifida fusca (strain YX).